The chain runs to 325 residues: Brain mitochondrial carrier protein 1 (325 aa).

6 helical membrane passes run 38 to 54 (GLNW…SIVA), 112 to 128 (LRQA…YQSL), 145 to 165 (MICG…TDVL), 199 to 215 (GVVP…GVEL), 240 to 256 (VSSF…SNPV), and 298 to 315 (GFWP…IFFI). 3 Solcar repeats span residues 42–131 (KPFV…LKRL), 139–224 (ETLL…TKKH), and 233–323 (DTIL…LKRL).

The protein belongs to the mitochondrial carrier (TC 2.A.29) family. As to quaternary structure, homotetramer. As to expression, mainly expressed in brain, particularly abundant in cortex, hippocampus thalamus, amygdala and hypothalamus. Highly expressed in heart and kidney, but not liver or lung (at protein level). In the nervous system, expressed in cortex, basal ganglia, substantia nigra, cerebellum, and spinal cord (at protein level).

Its subcellular location is the mitochondrion inner membrane. The enzyme catalyses sulfite(in) + sulfate(out) = sulfite(out) + sulfate(in). It carries out the reaction thiosulfate(in) + sulfate(out) = thiosulfate(out) + sulfate(in). It catalyses the reaction sulfate(out) + phosphate(in) = sulfate(in) + phosphate(out). The catalysed reaction is oxalate(in) + sulfate(out) = oxalate(out) + sulfate(in). The enzyme catalyses malonate(in) + sulfate(out) = malonate(out) + sulfate(in). It carries out the reaction maleate(in) + sulfate(out) = maleate(out) + sulfate(in). It catalyses the reaction (S)-malate(in) + sulfate(out) = (S)-malate(out) + sulfate(in). The catalysed reaction is (3S)-citramalate(in) + sulfate(out) = (3S)-citramalate(out) + sulfate(in). The enzyme catalyses (3R)-citramalate(in) + sulfate(out) = (3R)-citramalate(out) + sulfate(in). It carries out the reaction sulfate(out) + succinate(in) = sulfate(in) + succinate(out). It catalyses the reaction (S,S)-tartrate(in) + sulfate(out) = (S,S)-tartrate(out) + sulfate(in). The catalysed reaction is (2R,3R)-tartrate(in) + sulfate(out) = (2R,3R)-tartrate(out) + sulfate(in). The enzyme catalyses D-aspartate(in) + sulfate(out) = D-aspartate(out) + sulfate(in). It carries out the reaction L-aspartate(in) + sulfate(out) = L-aspartate(out) + sulfate(in). It catalyses the reaction sulfate(in) = sulfate(out). The catalysed reaction is phosphate(in) = phosphate(out). The enzyme catalyses (S)-malate(out) = (S)-malate(in). It carries out the reaction citrate(in) = citrate(out). It catalyses the reaction L-aspartate(out) = L-aspartate(in). The catalysed reaction is L-glutamate(out) = L-glutamate(in). The enzyme catalyses H(+)(in) = H(+)(out). It carries out the reaction chloride(in) = chloride(out). Its function is as follows. Transports inorganic anions (sulfate, sulfite, thiosulfate and phosphate) and, to a lesser extent, a variety of dicarboxylates (e.g. malonate, malate and citramalate) and, even more so, aspartate and glutamate and tricarboxylates. May catalyze the export of sulfite and thiosulfate (the hydrogen sulfide degradation products) from the mitochondria, thereby modulating the level of the hydrogen sulfide. Also can mediate a very low unidirectional transport of anions including sulfate, phosphate, (S)-malate, citrate, L-aspartate and L-glutamate. Maintains oxidative balance (through uncoupling activities) and ATP production (by modifying mitochondrial membrane potential). Is able to transport protons across lipid membranes. Also exhibits transmembrane chloride transport activity to a lesser extent. May modify mitochondrial respiratory efficiency and mitochondrial oxidant production. This chain is Brain mitochondrial carrier protein 1, found in Mus musculus (Mouse).